A 66-amino-acid polypeptide reads, in one-letter code: MSENGLKEQITGKVEKTKGQVKEGIGEVTEDRKLKNEGKWDKTKGTIKEKVGKVKQKISDGLDNKE.

The interval 1 to 22 (MSENGLKEQITGKVEKTKGQVK) is disordered. Basic and acidic residues predominate over residues 13–22 (KVEKTKGQVK).

This sequence belongs to the UPF0337 (CsbD) family.

The chain is UPF0337 protein BT9727_0908 from Bacillus thuringiensis subsp. konkukian (strain 97-27).